A 349-amino-acid polypeptide reads, in one-letter code: N-formyl peptide receptor 3 (349 aa).

Residues 1 to 27 (METNFSIPLNETEEVLPEPAGHTVLWI) lie on the Extracellular side of the membrane. Residues N4 and N10 are each glycosylated (N-linked (GlcNAc...) asparagine). The chain crosses the membrane as a helical span at residues 28-50 (FSLLVHGVTFVFGVLGNGLVIWV). The Cytoplasmic segment spans residues 51–61 (AGFRMTRTVNT). A helical membrane pass occupies residues 62 to 83 (ICYLNLALADFSFSAILPFRMV). Topologically, residues 84-100 (SVAMREKWPFGSFLCKL) are extracellular. C98 and C176 are oxidised to a cystine. A helical transmembrane segment spans residues 101-121 (VHVMIDINLFVSVYLITIIAL). At 122–140 (DRCICVLHPAWAQNHRTMS) the chain is on the cytoplasmic side. Residues 141 to 162 (LAKRVMTGLWILTIVLTLPNFI) form a helical membrane-spanning segment. Residues 163 to 205 (FWTTIRTTNGDTYCIFNFAFWGDTAVERLNVFITMAKVFLILH) lie on the Extracellular side of the membrane. Residues 206–226 (FIIGFSMPMSIITVCYGIIAA) form a helical membrane-spanning segment. At 227 to 242 (KIHRNHMIKSSRPLRV) the chain is on the cytoplasmic side. The helical transmembrane segment at 243–266 (FAAVVASFFICWFPYELIGILMAV) threads the bilayer. The Extracellular segment spans residues 267–286 (WLKEMLLNGKYKIILVLINP). The chain crosses the membrane as a helical span at residues 287-306 (TSSLAFFNSCLNPILYVFMG). The Cytoplasmic segment spans residues 307-349 (RNFQERLIRSLPTSLERALTEVPDSAQTSNTHTTSASPPEETE). A disordered region spans residues 327–349 (EVPDSAQTSNTHTTSASPPEETE). A compositionally biased stretch (polar residues) spans 331 to 343 (SAQTSNTHTTSAS).

This sequence belongs to the G-protein coupled receptor 1 family.

It is found in the cell membrane. Its function is as follows. Low affinity receptor for N-formyl-methionyl peptides, which are powerful neutrophils chemotactic factors. Binding of FMLP to the receptor causes activation of neutrophils. This response is mediated via a G-protein that activates a phosphatidylinositol-calcium second messenger system. This chain is N-formyl peptide receptor 3 (FPR3), found in Pan troglodytes (Chimpanzee).